The following is a 123-amino-acid chain: MRFLGVNLPDNKAVVVALTYLYGIGLPTARKICSSLAIDGSAKLPDLEQEQLNSIMAYIKNDIPFEGELRKSVAFSIKHLVDIKCYRGVRHRKNLPVRGQRTRTNARTRKGKVRVPIAAKKRV.

It belongs to the universal ribosomal protein uS13 family. Part of the 30S ribosomal subunit. Forms a loose heterodimer with protein S19. Forms two bridges to the 50S subunit in the 70S ribosome.

Functionally, located at the top of the head of the 30S subunit, it contacts several helices of the 16S rRNA. In the 70S ribosome it contacts the 23S rRNA (bridge B1a) and protein L5 of the 50S subunit (bridge B1b), connecting the 2 subunits; these bridges are implicated in subunit movement. Contacts the tRNAs in the A and P-sites. This Neorickettsia sennetsu (strain ATCC VR-367 / Miyayama) (Ehrlichia sennetsu) protein is Small ribosomal subunit protein uS13.